The chain runs to 357 residues: Transcription factor PCF6 (357 aa).

The segment at 1–29 is disordered; sequence MEAAVGDGEGGGGGGGRGKRGRGGGGGEM. The segment covering 7 to 16 has biased composition (gly residues); that stretch reads DGEGGGGGGG. The region spanning 52–110 is the TCP domain; sequence GKDRHSKVYTAKGIRDRRVRLSVATAIQFYDLQDRLGFDQPSKAIEWLINAASPAIDTL. Disordered regions lie at residues 125-162 and 281-307; these read AADA…DKEV and ANRG…QQLQ. 2 stretches are compositionally biased toward polar residues: residues 142-155 and 284-295; these read LSNK…SETS and GTLQSNSPSNMS.

In terms of assembly, forms homodimers and heterodimers.

It is found in the nucleus. Its function is as follows. Transcription activator. Binds the promoter core sequence 5'-GGNCC-3'. In Oryza sativa subsp. japonica (Rice), this protein is Transcription factor PCF6 (PCF6).